The following is a 521-amino-acid chain: Bifunctional purine biosynthesis protein PurH (521 aa).

Positions 1-150 constitute an MGS-like domain; that stretch reads MSEDRKAIKR…KNHPSVAVVT (150 aa).

It belongs to the PurH family.

It catalyses the reaction (6R)-10-formyltetrahydrofolate + 5-amino-1-(5-phospho-beta-D-ribosyl)imidazole-4-carboxamide = 5-formamido-1-(5-phospho-D-ribosyl)imidazole-4-carboxamide + (6S)-5,6,7,8-tetrahydrofolate. It carries out the reaction IMP + H2O = 5-formamido-1-(5-phospho-D-ribosyl)imidazole-4-carboxamide. The protein operates within purine metabolism; IMP biosynthesis via de novo pathway; 5-formamido-1-(5-phospho-D-ribosyl)imidazole-4-carboxamide from 5-amino-1-(5-phospho-D-ribosyl)imidazole-4-carboxamide (10-formyl THF route): step 1/1. It participates in purine metabolism; IMP biosynthesis via de novo pathway; IMP from 5-formamido-1-(5-phospho-D-ribosyl)imidazole-4-carboxamide: step 1/1. This chain is Bifunctional purine biosynthesis protein PurH, found in Corynebacterium efficiens (strain DSM 44549 / YS-314 / AJ 12310 / JCM 11189 / NBRC 100395).